We begin with the raw amino-acid sequence, 457 residues long: Argininosuccinate lyase (457 aa).

This sequence belongs to the lyase 1 family. Argininosuccinate lyase subfamily.

It is found in the cytoplasm. The enzyme catalyses 2-(N(omega)-L-arginino)succinate = fumarate + L-arginine. Its pathway is amino-acid biosynthesis; L-arginine biosynthesis; L-arginine from L-ornithine and carbamoyl phosphate: step 3/3. The polypeptide is Argininosuccinate lyase (Escherichia coli O139:H28 (strain E24377A / ETEC)).